Reading from the N-terminus, the 460-residue chain is Notoamide biosynthesis cluster transcriptional coactivator notR (460 aa).

The region spanning 74-145 (LQDLARQVEI…EPMPNYVSHT (72 aa)) is the HTH iclR-type domain. Positions 107-126 (IQDLADLAGVPDIQLRRVIR) form a DNA-binding region, H-T-H motif. Positions 300 to 320 (TRDFTPQPESSPRPGSASSRV) are disordered.

It is found in the nucleus. In terms of biological role, transcription factor that probably regulates the expression of the gene cluster that mediates the biosynthesis of notoamide, a fungal indole alkaloid that belongs to a family of natural products containing a characteristic bicyclo[2.2.2]diazaoctane core. In Aspergillus sp. (strain MF297-2), this protein is Notoamide biosynthesis cluster transcriptional coactivator notR.